The sequence spans 274 residues: N-acetylmuramic acid 6-phosphate etherase (274 aa).

The 164-residue stretch at Ile-52–Arg-215 folds into the SIS domain. Residue Glu-80 is the Proton donor of the active site. Glu-111 is an active-site residue.

Belongs to the GCKR-like family. MurNAc-6-P etherase subfamily. In terms of assembly, homodimer.

It carries out the reaction N-acetyl-D-muramate 6-phosphate + H2O = N-acetyl-D-glucosamine 6-phosphate + (R)-lactate. The protein operates within amino-sugar metabolism; N-acetylmuramate degradation. In terms of biological role, specifically catalyzes the cleavage of the D-lactyl ether substituent of MurNAc 6-phosphate, producing GlcNAc 6-phosphate and D-lactate. This chain is N-acetylmuramic acid 6-phosphate etherase, found in Porphyromonas gingivalis (strain ATCC BAA-308 / W83).